Reading from the N-terminus, the 403-residue chain is Argininosuccinate synthase (403 aa).

8 to 16 (AYSGGLDTS) contributes to the ATP binding site. Position 87 (Y87) interacts with L-citrulline. An ATP-binding site is contributed by G117. Positions 119, 123, and 124 each coordinate L-aspartate. L-citrulline is bound at residue N123. R127, S175, E259, and Y271 together coordinate L-citrulline.

This sequence belongs to the argininosuccinate synthase family. Type 1 subfamily. Homotetramer.

The protein resides in the cytoplasm. The enzyme catalyses L-citrulline + L-aspartate + ATP = 2-(N(omega)-L-arginino)succinate + AMP + diphosphate + H(+). Its pathway is amino-acid biosynthesis; L-arginine biosynthesis; L-arginine from L-ornithine and carbamoyl phosphate: step 2/3. This Salinispora arenicola (strain CNS-205) protein is Argininosuccinate synthase.